The primary structure comprises 1907 residues: Probable RNA-directed RNA polymerase (1907 aa).

Residues 42–61 are disordered; the sequence is NTHNDHEETHGESPEVPKAS. Residues 44-56 show a composition bias toward basic and acidic residues; it reads HNDHEETHGESPE.

The protein belongs to the totiviridae RNA-directed RNA polymerase family.

It catalyses the reaction RNA(n) + a ribonucleoside 5'-triphosphate = RNA(n+1) + diphosphate. In terms of biological role, RNA-dependent RNA polymerase which replicates the viral genome. Catalyzes the transcription of fully conservative plus-strand genomic RNAs that are extruded from the virion into the cytoplasm where they function as mRNAs for translation of viral proteins and also as substrates for encapsidation to form new virions. Once encapsidated, the positive strand is converted to dsRNA by the RNA-directed RNA polymerase. Displays ssRNA-binding activity. The protein is Probable RNA-directed RNA polymerase (gag-pol) of Giardia intestinalis (Giardia lamblia).